A 190-amino-acid chain; its full sequence is Elongation factor P 1 (190 aa).

The protein belongs to the elongation factor P family.

The protein resides in the cytoplasm. The protein operates within protein biosynthesis; polypeptide chain elongation. In terms of biological role, involved in peptide bond synthesis. Stimulates efficient translation and peptide-bond synthesis on native or reconstituted 70S ribosomes in vitro. Probably functions indirectly by altering the affinity of the ribosome for aminoacyl-tRNA, thus increasing their reactivity as acceptors for peptidyl transferase. The polypeptide is Elongation factor P 1 (efp1) (Lactobacillus johnsonii (strain CNCM I-12250 / La1 / NCC 533)).